We begin with the raw amino-acid sequence, 352 residues long: Probable protein phosphatase 2C 56 (352 aa).

Disordered regions lie at residues 18 to 37 and 53 to 87; these read RGRRVAASPSPGGTPAASRG and SSSSFAPPRMQARRAAGSAARTRSPSQSNGWITGG. Composition is skewed to low complexity over residues 23–37 and 53–75; these read AASPSPGGTPAASRG and SSSSFAPPRMQARRAAGSAARTR. The PPM-type phosphatase domain occupies 96–343; sequence SWDYSSFKGR…DNITCIVLQF (248 aa). Residues aspartate 132, glycine 133, aspartate 295, and aspartate 334 each coordinate Mn(2+).

Belongs to the PP2C family. Mg(2+) serves as cofactor. Mn(2+) is required as a cofactor.

It catalyses the reaction O-phospho-L-seryl-[protein] + H2O = L-seryl-[protein] + phosphate. The enzyme catalyses O-phospho-L-threonyl-[protein] + H2O = L-threonyl-[protein] + phosphate. The chain is Probable protein phosphatase 2C 56 from Oryza sativa subsp. japonica (Rice).